The sequence spans 356 residues: Nuclear hormone receptor family member nhr-42 (356 aa).

A DNA-binding region (nuclear receptor) is located at residues Ser-7–Ser-82. An NR C4-type zinc finger spans residues Cys-10–Cys-30. An NR C4-type; atypical zinc finger spans residues Cys-48–Cys-70. In terms of domain architecture, NR LBD spans Thr-108–Glu-356.

This sequence belongs to the nuclear hormone receptor family.

It is found in the nucleus. Functionally, orphan nuclear receptor. The sequence is that of Nuclear hormone receptor family member nhr-42 (nhr-42) from Caenorhabditis elegans.